Here is a 384-residue protein sequence, read N- to C-terminus: uncharacterized protein (384 aa).

Residues 1–116 (MTEMPKKKFS…FPAAPPPMDS (116 aa)) are disordered. Basic and acidic residues-rich tracts occupy residues 14 to 70 (ARGD…RAGD) and 78 to 95 (RFKD…DRPR). 3 residues coordinate S-adenosyl-L-methionine: glycine 318, isoleucine 338, and leucine 347.

It belongs to the class IV-like SAM-binding methyltransferase superfamily. RNA methyltransferase TrmH family.

This is an uncharacterized protein from Synechocystis sp. (strain ATCC 27184 / PCC 6803 / Kazusa).